We begin with the raw amino-acid sequence, 528 residues long: MGWPCRSIIPLLVWCFVTLQAATREQKQPHGFAEDRLFKHLFTGYNRWSRPVPNTSDVVIVKFGLSIAQLIDVDEKNQMMTTNVWLKQEWSDYKLRWNPEDFDNVTSIRVPSEMIWIPDIVLYNNADGEFAVTHMTKAHLFSNGKVKWVPPAIYKSSCSIDVTYFPFDQQNCKMKFGSWTYDKAKIDLENMEHHVDLKDYWESGEWAIINAIGRYNSKKYDCCTEIYPDITFYFVIRRLPLFYTINLIIPCLLISCLTVLVFYLPSDCGEKITLCISVLLSLTVFLLLITEIIPSTSLVIPLIGEYLLFTMIFVTLSIIITVFVLNVHHRSPSTHTMPHWVRSFFLGFIPRWLFMKRPPLLLPAEGTTGQYDPPGTRLSTSRCWLETDVDDKWEEEEEEEEEEEEEEEEEKAYPSRVPSGGSQGTQCHYSCERQAGKASGGPAPQVPLKGEEVGSDQGLTLSPSILRALEGVQYIADHLRAEDADFSVKEDWKYVAMVIDRIFLWMFIIVCLLGTVGLFLPPYLAGMI.

Positions 1-23 (MGWPCRSIIPLLVWCFVTLQAAT) are cleaved as a signal peptide. The Extracellular segment spans residues 24–239 (REQKQPHGFA…ITFYFVIRRL (216 aa)). N-linked (GlcNAc...) asparagine glycans are attached at residues asparagine 54 and asparagine 104. Disulfide bonds link cysteine 158–cysteine 172 and cysteine 222–cysteine 223. The next 3 helical transmembrane spans lie at 240 to 264 (PLFY…VFYL), 272 to 290 (ITLC…LLIT), and 306 to 327 (YLLF…VLNV). Residues 328–501 (HHRSPSTHTM…WKYVAMVIDR (174 aa)) are Cytoplasmic-facing. Residues 390–410 (DDKWEEEEEEEEEEEEEEEEE) are compositionally biased toward acidic residues. Residues 390–427 (DDKWEEEEEEEEEEEEEEEEEKAYPSRVPSGGSQGTQC) are disordered. Residues 502–520 (IFLWMFIIVCLLGTVGLFL) traverse the membrane as a helical segment.

It belongs to the ligand-gated ion channel (TC 1.A.9) family. Acetylcholine receptor (TC 1.A.9.1) subfamily. Alpha-2/CHRNA2 sub-subfamily. As to quaternary structure, neuronal AChR is composed of two different types of subunits: alpha and non-alpha (beta). CHRNA2/alpha-2 subunit can be combined to CHRNB2/beta-2 or CHRNB4/beta-4 to give rise to functional receptors. Both CHRNA2:CHRNB2 and CHRNA2:CHRNB4 nAChR complexes are heteropentamers with two subtypes: LS (low agonist sensitivity) with a (CHRNA2)3:(CHRNB2/4)2 and HS (high agonist sensitivity) with a (CHRNA2)2:(CHRNB2/4)3 stoichiometries; the subtypes differ in their subunit binding interfaces which are involved in ligand binding.

Its subcellular location is the synaptic cell membrane. It is found in the cell membrane. It carries out the reaction Ca(2+)(in) = Ca(2+)(out). The enzyme catalyses K(+)(in) = K(+)(out). The catalysed reaction is Na(+)(in) = Na(+)(out). In terms of biological role, component of neuronal acetylcholine receptors (nAChRs) that function as pentameric, ligand-gated cation channels with high calcium permeability among other activities. nAChRs are excitatory neurotrasnmitter receptors formed by a collection of nAChR subunits known to mediate synaptic transmission in the nervous system and the neuromuscular junction. Each nAchR subunit confers differential attributes to channel properties, including activation, deactivation and desensitization kinetics, pH sensitivity, cation permeability, and binding to allosteric modulators. CHRNA2 forms heteropentameric neuronal acetylcholine receptors with CHRNB2 and CHRNB4 and plays a role in nicotine dependence. The chain is Neuronal acetylcholine receptor subunit alpha-2 (CHRNA2) from Gallus gallus (Chicken).